The sequence spans 106 residues: MTDEPNQDDPQGPEVEAAKPSLKQPPMYKVVLLNDDYTPMDFVVEVLQRFFNKDRSQATQIMLHVHTRGKGVCGVYSRDVAETKVSQVNDYAREHEHPLLCTMEEA.

The tract at residues 1 to 22 is disordered; the sequence is MTDEPNQDDPQGPEVEAAKPSL.

The protein belongs to the ClpS family. As to quaternary structure, binds to the N-terminal domain of the chaperone ClpA.

Its function is as follows. Involved in the modulation of the specificity of the ClpAP-mediated ATP-dependent protein degradation. In Halorhodospira halophila (strain DSM 244 / SL1) (Ectothiorhodospira halophila (strain DSM 244 / SL1)), this protein is ATP-dependent Clp protease adapter protein ClpS.